A 320-amino-acid polypeptide reads, in one-letter code: MRQTKTGILLANLGTPDAPTPEAVKRYLKQFLSDRRVVDTSRLLWWPLLRGVILPLRSPRVAKLYASVWMEGGSPLMVYSRQQQQALAQRLPETPVALGMSYGSPSLESAVDELLAEHVDHIVVLPLYPQFSCSTVGAVWDELARILARKRSIPGISFIRDYADNQDYINALANSVRASFAKHGEPDLLLLSYHGIPQRYADEGDDYPQRCRTTTRELASALGMAPEKVMMTFQSRFGREPWLMPYTDETLKMLGEKGVGYIQVMCPGFAADCLETLEEIAEQNREVFLGAGGKKYEYIPALNATPEHIEMMANLVAAYR.

Fe cation is bound by residues histidine 194 and glutamate 275.

This sequence belongs to the ferrochelatase family. Monomer.

Its subcellular location is the cytoplasm. The enzyme catalyses heme b + 2 H(+) = protoporphyrin IX + Fe(2+). The protein operates within porphyrin-containing compound metabolism; protoheme biosynthesis; protoheme from protoporphyrin-IX: step 1/1. Catalyzes the ferrous insertion into protoporphyrin IX. In Shigella boydii serotype 18 (strain CDC 3083-94 / BS512), this protein is Ferrochelatase.